We begin with the raw amino-acid sequence, 436 residues long: 3-ketoacyl-CoA thiolase (436 aa).

Catalysis depends on C99, which acts as the Acyl-thioester intermediate. Residues H392 and C422 each act as proton acceptor in the active site.

Belongs to the thiolase-like superfamily. Thiolase family. In terms of assembly, heterotetramer of two alpha chains (FadJ) and two beta chains (FadI).

The protein resides in the cytoplasm. The catalysed reaction is an acyl-CoA + acetyl-CoA = a 3-oxoacyl-CoA + CoA. The protein operates within lipid metabolism; fatty acid beta-oxidation. Functionally, catalyzes the final step of fatty acid oxidation in which acetyl-CoA is released and the CoA ester of a fatty acid two carbons shorter is formed. This Yersinia enterocolitica serotype O:8 / biotype 1B (strain NCTC 13174 / 8081) protein is 3-ketoacyl-CoA thiolase.